The primary structure comprises 590 residues: Potassium-transporting ATPase potassium-binding subunit (590 aa).

A run of 12 helical transmembrane segments spans residues 3–23, 63–83, 134–154, 177–197, 284–304, 312–332, 359–379, 388–408, 411–431, 451–471, 515–535, and 558–578; these read AFLL…KPLG, HYAL…YALQ, GLAV…IALI, VYVL…QGVI, FVQM…FGGM, WAVL…LAWA, FGIV…CGAV, ALGG…FGGV, GLYG…LMIG, IAIL…VVVT, LALG…VLAM, and LFVV…YIPA.

The protein belongs to the KdpA family. The system is composed of three essential subunits: KdpA, KdpB and KdpC.

The protein localises to the cell inner membrane. Functionally, part of the high-affinity ATP-driven potassium transport (or Kdp) system, which catalyzes the hydrolysis of ATP coupled with the electrogenic transport of potassium into the cytoplasm. This subunit binds the periplasmic potassium ions and delivers the ions to the membrane domain of KdpB through an intramembrane tunnel. This Ralstonia pickettii (strain 12J) protein is Potassium-transporting ATPase potassium-binding subunit.